The following is a 416-amino-acid chain: Alpha-1-antiproteinase (416 aa).

Positions 1–24 are cleaved as a signal peptide; it reads MALSITRGLLLLAALCCLAPISLA. Residues Asn68, Asn105, Asn143, and Asn269 are each glycosylated (N-linked (GlcNAc...) asparagine). Positions 371–390 are RCL; the sequence is GSTFLEAIPMSLPPDVEFNR. A Phosphoserine modification is found at Ser381.

This sequence belongs to the serpin family. Interacts with CELA2A. Interacts with ERGIC3 and LMAN1/ERGIC53. Interacts with PRSS1/Trypsin. As to expression, plasma.

The protein resides in the secreted. Inhibitor of serine proteases. Its primary target is elastase, but it also has a moderate affinity for plasmin and thrombin. Inhibits trypsin, chymotrypsin and plasminogen activator. This chain is Alpha-1-antiproteinase (SERPINA1), found in Bos taurus (Bovine).